Here is a 169-residue protein sequence, read N- to C-terminus: S-ribosylhomocysteine lyase (169 aa).

Fe cation-binding residues include H54, H58, and C128.

The protein belongs to the LuxS family. In terms of assembly, homodimer. It depends on Fe cation as a cofactor.

The enzyme catalyses S-(5-deoxy-D-ribos-5-yl)-L-homocysteine = (S)-4,5-dihydroxypentane-2,3-dione + L-homocysteine. Its function is as follows. Involved in the synthesis of autoinducer 2 (AI-2) which is secreted by bacteria and is used to communicate both the cell density and the metabolic potential of the environment. The regulation of gene expression in response to changes in cell density is called quorum sensing. Catalyzes the transformation of S-ribosylhomocysteine (RHC) to homocysteine (HC) and 4,5-dihydroxy-2,3-pentadione (DPD). This is S-ribosylhomocysteine lyase from Shewanella amazonensis (strain ATCC BAA-1098 / SB2B).